The chain runs to 379 residues: MQIIKTPLGIITRRGLQLSLLSLLLTMLSLTWAMPGWSLPLNQPMLLGALAQGNAITDPNAILRYALPIDNPEVRRLQDSLEDISNHIRAKRWPAIKKDVRAANLTITLKEDKILAGVPADRQPEAETLLGSIKTDLTALTEAVEAKDKEQVISFRKSALTAIGDLEALMVTDFPFAIPEEFANLPQLKGRATVEMTTNKGPLTIVVDGYSAPINAGNFVDLVQRKFYDGLPFIRSEDFFVTQAGDPPGPEAGFIDPQTKEYRAIPLEILVKGEEGPIYGMTLEDAGMYLPELALPFNAYGAIALARPETEPNGGSSQFFFFKFDTELTPPGFNLMDGRYSVFGYVVDGKETLEQLSEGDKIVSAKVISGADNLVNGNS.

The first 33 residues, 1–33 (MQIIKTPLGIITRRGLQLSLLSLLLTMLSLTWA), serve as a signal peptide directing secretion. Residues 190–378 (GRATVEMTTN…SGADNLVNGN (189 aa)) form the PPIase cyclophilin-type domain.

Its subcellular location is the cellular thylakoid lumen. The enzyme catalyses [protein]-peptidylproline (omega=180) = [protein]-peptidylproline (omega=0). Functionally, PPIases accelerate the folding of proteins. It catalyzes the cis-trans isomerization of proline imidic peptide bonds in oligopeptides. Required for the assembly and stabilization of PSII. The chain is Putative thylakoid lumen peptidyl-prolyl cis-trans isomerase sll0408 from Synechocystis sp. (strain ATCC 27184 / PCC 6803 / Kazusa).